The chain runs to 952 residues: UvrABC system protein A (952 aa).

31-38 contacts ATP; sequence GVSGSGKS. Residues 253–280 form a C4-type zinc finger; it reads CPEHGSVLEELEPRIFSFNSPYGACPAC. 2 ABC transporter domains span residues 309–591 and 611–938; these read WSRG…PQSL and GNGK…AFLA. 643-650 contributes to the ATP binding site; sequence GPSGSGKS. A C4-type zinc finger spans residues 742–768; the sequence is CEACGGDGTVKIEMLFLPDLYVPCEVC.

Belongs to the ABC transporter superfamily. UvrA family. In terms of assembly, forms a heterotetramer with UvrB during the search for lesions.

Its subcellular location is the cytoplasm. The UvrABC repair system catalyzes the recognition and processing of DNA lesions. UvrA is an ATPase and a DNA-binding protein. A damage recognition complex composed of 2 UvrA and 2 UvrB subunits scans DNA for abnormalities. When the presence of a lesion has been verified by UvrB, the UvrA molecules dissociate. The protein is UvrABC system protein A of Thermus thermophilus (strain ATCC 27634 / DSM 579 / HB8).